Here is a 285-residue protein sequence, read N- to C-terminus: Urease accessory protein UreD (285 aa).

This sequence belongs to the UreD family. As to quaternary structure, ureD, UreF and UreG form a complex that acts as a GTP-hydrolysis-dependent molecular chaperone, activating the urease apoprotein by helping to assemble the nickel containing metallocenter of UreC. The UreE protein probably delivers the nickel.

It localises to the cytoplasm. Functionally, required for maturation of urease via the functional incorporation of the urease nickel metallocenter. The protein is Urease accessory protein UreD of Picosynechococcus sp. (strain ATCC 27264 / PCC 7002 / PR-6) (Agmenellum quadruplicatum).